The primary structure comprises 233 residues: Serine-rich 25 kDa antigen protein (233 aa).

A disordered region spans residues 35–219 (KNEASPEKLE…DNNNLDAASS (185 aa)). Basic and acidic residues predominate over residues 38–53 (ASPEKLEEAEEKEKSS). The segment covering 61–71 (SNEDNEDDEDE) has biased composition (acidic residues). A run of 10 repeats spans residues 82–93 (SSSDKPDNKPEA), 102–113 (SSSDKPDNKPEA), 114–125 (SSSDKPDNKPEA), 126–137 (SSSDKPDNKPEA), 138–149 (SSSDKPDNKPEA), 150–161 (SSSDKPDNKPEA), 162–169 (SSTNKPEA), 170–177 (SSTNKPEA), 178–185 (SSTNKPEA), and 186–193 (SSTNKPEA). Residues 82-161 (SSSDKPDNKP…SDKPDNKPEA (80 aa)) form a 6 X 12 AA tandem repeats of S-S-S-D-K-P-D-N-K-P-E-A region. Over residues 83-159 (SSDKPDNKPE…SSSDKPDNKP (77 aa)) the composition is skewed to basic and acidic residues. The span at 160-192 (EASSTNKPEASSTNKPEASSTNKPEASSTNKPE) shows a compositional bias: polar residues. The tract at residues 162 to 193 (SSTNKPEASSTNKPEASSTNKPEASSTNKPEA) is 4 X 8 AA tandem repeats of S-S-T-N-K-P-E-A. A compositionally biased stretch (low complexity) spans 193 to 219 (ASSTSNSNDKSGSSSDNDNNNLDAASS).

Post-translationally, phosphorylated on serine residue(s). In terms of processing, O-glycosylated; glycans consist of single N-acetylglucosamine residues. O-acylated; acyl group is probably palmitate, not myristate.

Its subcellular location is the cell membrane. Its function is as follows. Plays a role in the adhesion to host cells. Involved in the adhesion to host apoptotic cells thereby facilitating their phagocytosis. The protein is Serine-rich 25 kDa antigen protein of Entamoeba histolytica (strain ATCC 30459 / HM-1:IMSS / ABRM).